Consider the following 465-residue polypeptide: Chromosomal replication initiator protein DnaA (465 aa).

A domain I, interacts with DnaA modulators region spans residues 1 to 84 (MSLSLWQQCL…RFEVGSKPLV (84 aa)). The domain II stretch occupies residues 84–128 (VQTISQPAQSHHNPVSVARQQPVRMAPVRPSWDNSPVQAEHTYRS). Positions 129–345 (NVNPKHTFDN…GALNRVIANA (217 aa)) are domain III, AAA+ region. ATP-binding residues include Gly173, Gly175, Lys176, and Thr177. Residues 346-465 (NFTGRSITID…FSNLIRTLSS (120 aa)) form a domain IV, binds dsDNA region.

This sequence belongs to the DnaA family. Oligomerizes as a right-handed, spiral filament on DNA at oriC.

The protein localises to the cytoplasm. In terms of biological role, plays an essential role in the initiation and regulation of chromosomal replication. ATP-DnaA binds to the origin of replication (oriC) to initiate formation of the DNA replication initiation complex once per cell cycle. Binds the DnaA box (a 9 base pair repeat at the origin) and separates the double-stranded (ds)DNA. Forms a right-handed helical filament on oriC DNA; dsDNA binds to the exterior of the filament while single-stranded (ss)DNA is stabiized in the filament's interior. The ATP-DnaA-oriC complex binds and stabilizes one strand of the AT-rich DNA unwinding element (DUE), permitting loading of DNA polymerase. After initiation quickly degrades to an ADP-DnaA complex that is not apt for DNA replication. Binds acidic phospholipids. The protein is Chromosomal replication initiator protein DnaA of Pectobacterium atrosepticum (strain SCRI 1043 / ATCC BAA-672) (Erwinia carotovora subsp. atroseptica).